We begin with the raw amino-acid sequence, 780 residues long: ATP-dependent 6-phosphofructokinase, liver type (780 aa).

Position 2 is an N-acetylalanine (alanine 2). The segment at 2 to 390 is N-terminal catalytic PFK domain 1; that stretch reads ATVDLEKLRM…NWKIYKLLAH (389 aa). Residues glycine 25, 88 to 89, and 118 to 121 each bind ATP; these read RC and GDGS. Residue aspartate 119 participates in Mg(2+) binding. Residues 164–166, arginine 201, 208–210, glutamate 264, arginine 292, and 298–301 each bind substrate; these read SID, MGR, and HVQR. Residue aspartate 166 is the Proton acceptor of the active site. Position 377 is a phosphoserine (serine 377). Positions 391 to 400 are interdomain linker; it reads QKVSKEKSNF. The tract at residues 401–780 is C-terminal regulatory PFK domain 2; it reads SLAILNVGAP…RRTLSIDKGF (380 aa). Beta-D-fructose 2,6-bisphosphate contacts are provided by residues arginine 470, 527 to 531, arginine 565, 572 to 574, and glutamate 628; these read TISNN and MGG. O-linked (GlcNAc) serine glycosylation occurs at serine 529. The residue at position 640 (tyrosine 640) is a Phosphotyrosine. Beta-D-fructose 2,6-bisphosphate contacts are provided by residues arginine 654, 660-663, and arginine 734; that span reads HLQQ. At serine 775 the chain carries Phosphoserine.

This sequence belongs to the phosphofructokinase type A (PFKA) family. ATP-dependent PFK group I subfamily. Eukaryotic two domain clade 'E' sub-subfamily. As to quaternary structure, homo- and heterotetramers. Phosphofructokinase (PFK) enzyme functions as a tetramer composed of different combinations of 3 types of subunits, called PFKM (M), PFKL (L) and PFKP (P). The composition of the PFK tetramer differs according to the tissue type it is present in. The kinetic and regulatory properties of the tetrameric enzyme are dependent on the subunit composition, hence can vary across tissues. The cofactor is Mg(2+). Post-translationally, glcNAcylation at Ser-529 by OGT decreases enzyme activity, leading to redirect glucose flux through the oxidative pentose phosphate pathway. Glycosylation is stimulated by both hypoxia and glucose deprivation.

The protein resides in the cytoplasm. It carries out the reaction beta-D-fructose 6-phosphate + ATP = beta-D-fructose 1,6-bisphosphate + ADP + H(+). It functions in the pathway carbohydrate degradation; glycolysis; D-glyceraldehyde 3-phosphate and glycerone phosphate from D-glucose: step 3/4. With respect to regulation, allosterically activated by ADP, AMP, or fructose 2,6-bisphosphate, and allosterically inhibited by ATP or citrate. GlcNAcylation by OGT overcomes allosteric regulation. In terms of biological role, catalyzes the phosphorylation of D-fructose 6-phosphate to fructose 1,6-bisphosphate by ATP, the first committing step of glycolysis. Negatively regulates the phagocyte oxidative burst in response to bacterial infection by controlling cellular NADPH biosynthesis and NADPH oxidase-derived reactive oxygen species. Upon macrophage activation, drives the metabolic switch toward glycolysis, thus preventing glucose turnover that produces NADPH via pentose phosphate pathway. This is ATP-dependent 6-phosphofructokinase, liver type (Pfkl) from Rattus norvegicus (Rat).